Reading from the N-terminus, the 445-residue chain is UPF0210 protein SMU_73 (445 aa).

This sequence belongs to the UPF0210 family. In terms of assembly, homodimer.

In Streptococcus mutans serotype c (strain ATCC 700610 / UA159), this protein is UPF0210 protein SMU_73.